A 171-amino-acid polypeptide reads, in one-letter code: Lipoprotein signal peptidase (171 aa).

Transmembrane regions (helical) follow at residues 8–28 (SFLW…YIVV), 64–84 (WQQY…VYFL), and 99–119 (ALII…GFVV). Catalysis depends on residues Asp-120 and Asp-138. The helical transmembrane segment at 133–153 (VFNIADIAICIGAGLLALDAF) threads the bilayer.

It belongs to the peptidase A8 family.

The protein resides in the cell inner membrane. It carries out the reaction Release of signal peptides from bacterial membrane prolipoproteins. Hydrolyzes -Xaa-Yaa-Zaa-|-(S,diacylglyceryl)Cys-, in which Xaa is hydrophobic (preferably Leu), and Yaa (Ala or Ser) and Zaa (Gly or Ala) have small, neutral side chains.. Its pathway is protein modification; lipoprotein biosynthesis (signal peptide cleavage). This protein specifically catalyzes the removal of signal peptides from prolipoproteins. This chain is Lipoprotein signal peptidase, found in Haemophilus influenzae (strain PittGG).